Reading from the N-terminus, the 351-residue chain is Lipoyl synthase (351 aa).

Residues 1 to 10 (MNDSGNSSKV) show a composition bias toward polar residues. Positions 1–27 (MNDSGNSSKVNVRPPSAGLGAPSPGKR) are disordered. Over residues 14–24 (PPSAGLGAPSP) the composition is skewed to low complexity. Positions 74, 79, 85, 100, 104, 107, and 311 each coordinate [4Fe-4S] cluster. The Radical SAM core domain maps to 86 to 300 (WEDREATFLI…KEQAKEIGFS (215 aa)).

Belongs to the radical SAM superfamily. Lipoyl synthase family. It depends on [4Fe-4S] cluster as a cofactor.

It is found in the cytoplasm. The catalysed reaction is [[Fe-S] cluster scaffold protein carrying a second [4Fe-4S](2+) cluster] + N(6)-octanoyl-L-lysyl-[protein] + 2 oxidized [2Fe-2S]-[ferredoxin] + 2 S-adenosyl-L-methionine + 4 H(+) = [[Fe-S] cluster scaffold protein] + N(6)-[(R)-dihydrolipoyl]-L-lysyl-[protein] + 4 Fe(3+) + 2 hydrogen sulfide + 2 5'-deoxyadenosine + 2 L-methionine + 2 reduced [2Fe-2S]-[ferredoxin]. It functions in the pathway protein modification; protein lipoylation via endogenous pathway; protein N(6)-(lipoyl)lysine from octanoyl-[acyl-carrier-protein]: step 2/2. In terms of biological role, catalyzes the radical-mediated insertion of two sulfur atoms into the C-6 and C-8 positions of the octanoyl moiety bound to the lipoyl domains of lipoate-dependent enzymes, thereby converting the octanoylated domains into lipoylated derivatives. The chain is Lipoyl synthase from Tropheryma whipplei (strain TW08/27) (Whipple's bacillus).